Reading from the N-terminus, the 218-residue chain is uncharacterized protein (218 aa).

Transmembrane regions (helical) follow at residues 9–29 (LLVIVGIDLILGGDNAVVIAM), 42–62 (AIILGTFIAVAMRIGLTSAAV), 67–87 (IPFLQCAGGIFLLYLGYQLLI), 107–127 (TIVLADLFMSLDNVIAVAGAS), 134–154 (VVIGLCVSVPVIIWGSKLIHI), 159–179 (IPLLIYAGSGLLAYTGGEMIV), and 192–212 (GTVETLLPILTVAFVILASIY).

Belongs to the TerC family.

The protein resides in the cell membrane. This is an uncharacterized protein from Bacillus subtilis (strain 168).